A 137-amino-acid polypeptide reads, in one-letter code: Gonadotropin subunit beta-1 (137 aa).

An N-terminal signal peptide occupies residues methionine 1–alanine 24. 5 disulfide bridges follow: cysteine 32/cysteine 78, cysteine 46/cysteine 93, cysteine 55/cysteine 108, cysteine 59/cysteine 110, and cysteine 113/cysteine 120. Asparagine 36 is a glycosylation site (N-linked (GlcNAc...) asparagine).

Belongs to the glycoprotein hormones subunit beta family. Heterodimer of an alpha and a beta chain.

The protein localises to the secreted. Its function is as follows. Involved in gametogenesis and steroidogenesis. This Oncorhynchus keta (Chum salmon) protein is Gonadotropin subunit beta-1 (cgba).